A 128-amino-acid chain; its full sequence is Sm-like protein LSM1A (128 aa).

In terms of domain architecture, Sm spans Phe-10–Glu-85.

It belongs to the snRNP Sm proteins family. As to quaternary structure, component of the heptameric LSM1-LSM7 complex that forms a seven-membered ring structure with a donut shape. The LSM subunits are arranged in the order LSM1, LSM2, LSM3, LSM6, LSM5, LSM7 and LSM4. LSM1A subunit interacts only with its two neighboring subunits, LSM2 and LSM4. As to expression, expressed in roots, leaves, stems, flowers and siliques.

It localises to the cytoplasm. Its subcellular location is the P-body. In terms of biological role, component of the cytoplasmic LSM1-LSM7 complex which is involved in mRNA degradation by promoting decapping and leading to accurate 5'-3' mRNA decay. LSM1A and LSM1B are essential for the formation of the cytoplasmic LSM1-LSM7 complex which regulates developmental gene expression by the decapping of specific development-related transcripts. Required for P-body formation during heat stress. The polypeptide is Sm-like protein LSM1A (Arabidopsis thaliana (Mouse-ear cress)).